Here is a 274-residue protein sequence, read N- to C-terminus: Undecaprenyl-diphosphatase (274 aa).

The next 8 helical transmembrane spans lie at 6–26, 45–65, 94–114, 117–137, 155–174, 191–211, 223–243, and 253–273; these read SLFI…LPVS, AKTF…VMFW, GHIL…HDVI, LFAP…LLAA, YRQA…PGFS, YAAA…ASGL, GDLP…LIAI, and ISFV…YMVF.

Belongs to the UppP family.

It localises to the cell inner membrane. The enzyme catalyses di-trans,octa-cis-undecaprenyl diphosphate + H2O = di-trans,octa-cis-undecaprenyl phosphate + phosphate + H(+). Functionally, catalyzes the dephosphorylation of undecaprenyl diphosphate (UPP). Confers resistance to bacitracin. This Serratia proteamaculans (strain 568) protein is Undecaprenyl-diphosphatase.